Here is a 274-residue protein sequence, read N- to C-terminus: 2,3,4,5-tetrahydropyridine-2,6-dicarboxylate N-succinyltransferase (274 aa).

Substrate contacts are provided by Arg104 and Asp141.

This sequence belongs to the transferase hexapeptide repeat family. Homotrimer.

Its subcellular location is the cytoplasm. It carries out the reaction (S)-2,3,4,5-tetrahydrodipicolinate + succinyl-CoA + H2O = (S)-2-succinylamino-6-oxoheptanedioate + CoA. It participates in amino-acid biosynthesis; L-lysine biosynthesis via DAP pathway; LL-2,6-diaminopimelate from (S)-tetrahydrodipicolinate (succinylase route): step 1/3. This Shewanella sediminis (strain HAW-EB3) protein is 2,3,4,5-tetrahydropyridine-2,6-dicarboxylate N-succinyltransferase.